The chain runs to 579 residues: V-type ATP synthase alpha chain (579 aa).

Residue 227-234 (GGFGTGKT) participates in ATP binding.

This sequence belongs to the ATPase alpha/beta chains family.

It catalyses the reaction ATP + H2O + 4 H(+)(in) = ADP + phosphate + 5 H(+)(out). Its function is as follows. Produces ATP from ADP in the presence of a proton gradient across the membrane. The V-type alpha chain is a catalytic subunit. The chain is V-type ATP synthase alpha chain from Anaeromyxobacter dehalogenans (strain 2CP-1 / ATCC BAA-258).